Here is a 379-residue protein sequence, read N- to C-terminus: Cytochrome b (379 aa).

A run of 4 helical transmembrane segments spans residues 34-54, 78-99, 114-134, and 179-199; these read FGSLLGICLITQILTGLLLAM, WLIRNLHANGASFFFICIYLHI, WNTGVVLLLTLMATAFVGYVL, and FFALHFLLPFLIAGITLIHLT. Heme b is bound by residues histidine 84 and histidine 98. Heme b is bound by residues histidine 183 and histidine 197. Histidine 202 lines the a ubiquinone pocket. Transmembrane regions (helical) follow at residues 227–247, 289–309, 321–341, and 348–368; these read LKDALGFALMFIPLLTLAFFS, LGGVLALAASVLILFLIPFLH, LSQILFWLLVANLLILTWIGS, and FIIIGQMASFSYFLILLVLFP.

It belongs to the cytochrome b family. As to quaternary structure, the cytochrome bc1 complex contains 11 subunits: 3 respiratory subunits (MT-CYB, CYC1 and UQCRFS1), 2 core proteins (UQCRC1 and UQCRC2) and 6 low-molecular weight proteins (UQCRH/QCR6, UQCRB/QCR7, UQCRQ/QCR8, UQCR10/QCR9, UQCR11/QCR10 and a cleavage product of UQCRFS1). This cytochrome bc1 complex then forms a dimer. The cofactor is heme b.

The protein localises to the mitochondrion inner membrane. Component of the ubiquinol-cytochrome c reductase complex (complex III or cytochrome b-c1 complex) that is part of the mitochondrial respiratory chain. The b-c1 complex mediates electron transfer from ubiquinol to cytochrome c. Contributes to the generation of a proton gradient across the mitochondrial membrane that is then used for ATP synthesis. This Rhea americana (Greater rhea) protein is Cytochrome b (MT-CYB).